The primary structure comprises 152 residues: 1,4-dihydroxy-2-naphthoyl-CoA hydrolase (152 aa).

The active site involves aspartate 20.

This sequence belongs to the 4-hydroxybenzoyl-CoA thioesterase family. DHNA-CoA hydrolase subfamily.

It catalyses the reaction 1,4-dihydroxy-2-naphthoyl-CoA + H2O = 1,4-dihydroxy-2-naphthoate + CoA + H(+). Its pathway is cofactor biosynthesis; phylloquinone biosynthesis. It functions in the pathway quinol/quinone metabolism; 1,4-dihydroxy-2-naphthoate biosynthesis; 1,4-dihydroxy-2-naphthoate from chorismate: step 7/7. In terms of biological role, catalyzes the hydrolysis of 1,4-dihydroxy-2-naphthoyl-CoA (DHNA-CoA) to 1,4-dihydroxy-2-naphthoate (DHNA), a reaction involved in phylloquinone (vitamin K1) biosynthesis. The chain is 1,4-dihydroxy-2-naphthoyl-CoA hydrolase from Parasynechococcus marenigrum (strain WH8102).